The primary structure comprises 170 residues: Photosystem II extrinsic protein V (170 aa).

An N-terminal signal peptide occupies residues 1–33 (MASVFSSLRRSLKGLLVLIPVLIGLAVTSPAQA). Heme c is bound by residues Cys-70, Cys-73, His-74, and His-125.

The protein belongs to the cytochrome c family. PsbV subfamily. In terms of assembly, PSII is composed of 1 copy each of membrane proteins PsbA, PsbB, PsbC, PsbD, PsbE, PsbF, PsbH, PsbI, PsbJ, PsbK, PsbL, PsbM, PsbT, PsbX, PsbY, PsbZ, Psb30/Ycf12, peripheral proteins PsbO, CyanoQ (PsbQ), PsbU, PsbV and a large number of cofactors. It forms dimeric complexes. The cofactor is heme c.

It is found in the cellular thylakoid membrane. Functionally, one of the extrinsic, lumenal subunits of photosystem II (PSII). PSII is a light-driven water plastoquinone oxidoreductase, using light energy to abstract electrons from H(2)O, generating a proton gradient subsequently used for ATP formation. The extrinsic proteins stabilize the structure of photosystem II oxygen-evolving complex (OEC), the ion environment of oxygen evolution and protect the OEC against heat-induced inactivation. Low-potential cytochrome c that plays a role in the OEC of PSII. This Synechococcus sp. (strain CC9605) protein is Photosystem II extrinsic protein V.